A 530-amino-acid chain; its full sequence is 6-phosphofructo-2-kinase/fructose-2,6-bisphosphatase 2 (530 aa).

A compositionally biased stretch (polar residues) spans 1 to 15; it reads MSGASSSEQNNNSYE. The segment at 1–21 is disordered; that stretch reads MSGASSSEQNNNSYETKPPNL. At serine 2 the chain carries N-acetylserine. The segment at 2-248 is 6-phosphofructo-2-kinase; sequence SGASSSEQNN…VYYLMNIHVQ (247 aa). Serine 29 bears the Phosphoserine; by PKA mark. 45–53 provides a ligand contact to ATP; sequence GLPARGKTY. Arginine 78 and arginine 102 together coordinate beta-D-fructose 6-phosphate. Residue aspartate 128 is part of the active site. Residues threonine 130 and arginine 136 each contribute to the beta-D-fructose 6-phosphate site. The active site involves cysteine 158. 167–172 is an ATP binding site; it reads NILEVK. Beta-D-fructose 6-phosphate is bound by residues lysine 172, arginine 193, and tyrosine 197. The tract at residues 249–530 is fructose-2,6-bisphosphatase; the sequence is PRTIYLCRHG…PPALASCPCH (282 aa). Arginine 256 serves as a coordination point for beta-D-fructose 2,6-bisphosphate. Histidine 257 serves as the catalytic Tele-phosphohistidine intermediate. Residue glycine 269 participates in beta-D-fructose 2,6-bisphosphate binding. Glutamate 326 serves as the catalytic Proton donor/acceptor. 6 residues coordinate beta-D-fructose 2,6-bisphosphate: tyrosine 337, arginine 351, lysine 355, tyrosine 366, glutamine 392, and arginine 396. ATP is bound at residue 348–351; the sequence is FALR. ATP-binding positions include 392-396 and tyrosine 428; that span reads QAVMR. The disordered stretch occupies residues 446–512; the sequence is RDKPTNNFPK…GPTSRRPKSH (67 aa). Residues 450-476 are compositionally biased toward polar residues; it reads TNNFPKNQTPVRMRRNSFTPLSSSNTI. The residue at position 466 (serine 466) is a Phosphoserine; by AMPK and PKA. Threonine 468 is modified (phosphothreonine). Threonine 475 is subject to Phosphothreonine; by PKC. Residues serine 483 and serine 493 each carry the phosphoserine modification.

This sequence in the C-terminal section; belongs to the phosphoglycerate mutase family. In terms of assembly, homodimer. Forms a heterodimer with PFKFB3. In terms of processing, phosphorylation by AMPK stimulates activity.

The enzyme catalyses beta-D-fructose 2,6-bisphosphate + H2O = beta-D-fructose 6-phosphate + phosphate. The catalysed reaction is beta-D-fructose 6-phosphate + ATP = beta-D-fructose 2,6-bisphosphate + ADP + H(+). With respect to regulation, phosphorylation results in the activation of the kinase activity. In terms of biological role, synthesis and degradation of fructose 2,6-bisphosphate. The sequence is that of 6-phosphofructo-2-kinase/fructose-2,6-bisphosphatase 2 (PFKFB2) from Pongo abelii (Sumatran orangutan).